The primary structure comprises 732 residues: Aldehyde oxidoreductase molybdenum-binding subunit PaoC (732 aa).

Mo-molybdopterin cytosine dinucleotide contacts are provided by residues 241-242 (GF), 468-470 (IGT), 511-512 (GA), 615-621 (RILNPKT), glutamine 625, and 688-691 (KGVG). Residue glutamate 692 is the Proton acceptor of the active site.

This sequence belongs to the xanthine dehydrogenase family. Heterotrimer composed of PaoA, PaoB and PaoC. Mo-molybdopterin cytosine dinucleotide serves as cofactor.

It is found in the periplasm. The catalysed reaction is an aldehyde + A + H2O = a carboxylate + AH2 + H(+). Oxidizes aldehydes to the corresponding carboxylic acids with a preference for aromatic aldehydes. It might play a role in the detoxification of aldehydes to avoid cell damage. This Escherichia coli O157:H7 protein is Aldehyde oxidoreductase molybdenum-binding subunit PaoC.